Consider the following 156-residue polypeptide: Nuclear cap-binding protein subunit 2 (156 aa).

N-acetylserine is present on Ser2. A phosphoserine mark is found at Ser13 and Ser18. MRNA is bound by residues Tyr20, Tyr43, 112–116 (RTDWD), 123–127 (RQYGR), and 133–134 (QV). One can recognise an RRM domain in the interval 40 to 118 (CTLYVGNLSF…RIIRTDWDAG (79 aa)). The disordered stretch occupies residues 124-156 (QYGRGRSGGQVRDEYRQDYDAGRGGYGKLAQNQ). Over residues 134-144 (VRDEYRQDYDA) the composition is skewed to basic and acidic residues. Arg146 carries the omega-N-methylarginine modification.

This sequence belongs to the RRM NCBP2 family. Component of the nuclear cap-binding complex (CBC), a heterodimer composed of NCBP1/CBP80 and NCBP2/CBP20 that interacts with m7GpppG-capped RNA. Found in a U snRNA export complex with PHAX/RNUXA, NCBP1/CBP80, NCBP2/CBP20, RAN, XPO1 and m7G-capped RNA. Interacts with PHAX/RNUXA, EIF4G1, HNRNPF, HNRNPH1 and ALYREF/THOC4/ALY. Interacts with SRRT/ARS2 and KPNA3.

Its subcellular location is the nucleus. It localises to the cytoplasm. In terms of biological role, component of the cap-binding complex (CBC), which binds co-transcriptionally to the 5' cap of pre-mRNAs and is involved in various processes such as pre-mRNA splicing, translation regulation, nonsense-mediated mRNA decay, RNA-mediated gene silencing (RNAi) by microRNAs (miRNAs) and mRNA export. The CBC complex is involved in mRNA export from the nucleus via its interaction with ALYREF/THOC4/ALY, leading to the recruitment of the mRNA export machinery to the 5' end of mRNA and to mRNA export in a 5' to 3' direction through the nuclear pore. The CBC complex is also involved in mediating U snRNA and intronless mRNAs export from the nucleus. The CBC complex is essential for a pioneer round of mRNA translation, before steady state translation when the CBC complex is replaced by cytoplasmic cap-binding protein eIF4E. The pioneer round of mRNA translation mediated by the CBC complex plays a central role in nonsense-mediated mRNA decay (NMD), NMD only taking place in mRNAs bound to the CBC complex, but not on eIF4E-bound mRNAs. The CBC complex enhances NMD in mRNAs containing at least one exon-junction complex (EJC) via its interaction with UPF1, promoting the interaction between UPF1 and UPF2. The CBC complex is also involved in 'failsafe' NMD, which is independent of the EJC complex, while it does not participate in Staufen-mediated mRNA decay (SMD). During cell proliferation, the CBC complex is also involved in microRNAs (miRNAs) biogenesis via its interaction with SRRT/ARS2, thereby being required for miRNA-mediated RNA interference. The CBC complex also acts as a negative regulator of PARN, thereby acting as an inhibitor of mRNA deadenylation. In the CBC complex, NCBP2/CBP20 recognizes and binds capped RNAs (m7GpppG-capped RNA) but requires NCBP1/CBP80 to stabilize the movement of its N-terminal loop and lock the CBC into a high affinity cap-binding state with the cap structure. The conventional cap-binding complex with NCBP2 binds both small nuclear RNA (snRNA) and messenger (mRNA) and is involved in their export from the nucleus. The chain is Nuclear cap-binding protein subunit 2 (NCBP2) from Bos taurus (Bovine).